We begin with the raw amino-acid sequence, 105 residues long: Large ribosomal subunit protein bL21 (105 aa).

This sequence belongs to the bacterial ribosomal protein bL21 family. Part of the 50S ribosomal subunit. Contacts protein L20.

Its function is as follows. This protein binds to 23S rRNA in the presence of protein L20. In Rickettsia typhi (strain ATCC VR-144 / Wilmington), this protein is Large ribosomal subunit protein bL21.